The primary structure comprises 689 residues: Glycine--tRNA ligase beta subunit (689 aa).

It belongs to the class-II aminoacyl-tRNA synthetase family. As to quaternary structure, tetramer of two alpha and two beta subunits.

Its subcellular location is the cytoplasm. The catalysed reaction is tRNA(Gly) + glycine + ATP = glycyl-tRNA(Gly) + AMP + diphosphate. This is Glycine--tRNA ligase beta subunit from Citrobacter koseri (strain ATCC BAA-895 / CDC 4225-83 / SGSC4696).